The sequence spans 155 residues: RNA pyrophosphohydrolase (155 aa).

Residues 5–147 (KYRPNVAAII…KRQVYRQVIA (143 aa)) form the Nudix hydrolase domain. The Nudix box motif lies at 42–63 (GGIDEGETPLEALHRELLEEIG).

The protein belongs to the Nudix hydrolase family. RppH subfamily. A divalent metal cation serves as cofactor.

Its function is as follows. Accelerates the degradation of transcripts by removing pyrophosphate from the 5'-end of triphosphorylated RNA, leading to a more labile monophosphorylated state that can stimulate subsequent ribonuclease cleavage. The protein is RNA pyrophosphohydrolase of Helicobacter pylori (strain G27).